The following is a 132-amino-acid chain: Large ribosomal subunit protein uL14 (132 aa).

The protein belongs to the universal ribosomal protein uL14 family. As to quaternary structure, part of the 50S ribosomal subunit. Forms a cluster with proteins L3 and L24e, part of which may contact the 16S rRNA in 2 intersubunit bridges.

In terms of biological role, binds to 23S rRNA. Forms part of two intersubunit bridges in the 70S ribosome. This chain is Large ribosomal subunit protein uL14, found in Thermoplasma acidophilum (strain ATCC 25905 / DSM 1728 / JCM 9062 / NBRC 15155 / AMRC-C165).